A 504-amino-acid polypeptide reads, in one-letter code: Galactose/methyl galactoside import ATP-binding protein MglA (504 aa).

ABC transporter domains are found at residues 8 to 247 (LEMN…VGRD) and 258 to 504 (TPGE…TRFI). Residue 40 to 47 (GENGAGKS) participates in ATP binding.

It belongs to the ABC transporter superfamily. Galactose/methyl galactoside importer (TC 3.A.1.2.3) family. The complex is composed of one ATP-binding protein (MglA), two transmembrane proteins (MglC) and a solute-binding protein (MglB).

It localises to the cell membrane. It catalyses the reaction D-galactose(out) + ATP + H2O = D-galactose(in) + ADP + phosphate + H(+). The catalysed reaction is methyl beta-D-galactoside(out) + ATP + H2O = methyl beta-D-galactoside(in) + ADP + phosphate + H(+). Its function is as follows. Part of the ABC transporter complex MglABC involved in galactose/methyl galactoside import. Responsible for energy coupling to the transport system. The sequence is that of Galactose/methyl galactoside import ATP-binding protein MglA from Clostridium tetani (strain Massachusetts / E88).